We begin with the raw amino-acid sequence, 302 residues long: MALLDLKQFYELREGCDDKGILVMDGDWLVFQAMSAAEFDASWEEEIWHRCCDHAKARQILEDSIKSYETRKKAWVGAPIVLAFTDSVNWRKELVDPNYKANRKATKKPVGYFEFLEALFEREEFYCIREPMLEGDDVMGVIASNPSAFGARKAVIISCDKDFKTIPNCDFLWCTTGNILTQTKETADWWHLFQTIKGDMTDGYSGIPGWGDTAEGFLNDPFIVEPVESVLKSGKNKGQTVTKWVKRAPDATETLWDCIKSIGAKAGMTEQEIIKQGQMARILRFEEYNYIDKEIYLWTPRS.

The enzyme catalyses Exonucleolytic cleavage in the 5'- to 3'-direction to yield nucleoside 5'-phosphates.. Functionally, this enzyme is essential for phage DNA replication; it is believed to function in the removal of DNA-linked RNA primers. It is also necessary for host DNA degradation and phage genetic recombination. The sequence is that of Exodeoxyribonuclease (6) from Enterobacteria phage T3 (Bacteriophage T3).